The chain runs to 403 residues: Phosphopentomutase (403 aa).

6 residues coordinate Mn(2+): Asp-13, Asp-298, His-303, Asp-339, His-340, and His-351.

Belongs to the phosphopentomutase family. Requires Mn(2+) as cofactor.

The protein resides in the cytoplasm. It carries out the reaction 2-deoxy-alpha-D-ribose 1-phosphate = 2-deoxy-D-ribose 5-phosphate. The catalysed reaction is alpha-D-ribose 1-phosphate = D-ribose 5-phosphate. It participates in carbohydrate degradation; 2-deoxy-D-ribose 1-phosphate degradation; D-glyceraldehyde 3-phosphate and acetaldehyde from 2-deoxy-alpha-D-ribose 1-phosphate: step 1/2. Isomerase that catalyzes the conversion of deoxy-ribose 1-phosphate (dRib-1-P) and ribose 1-phosphate (Rib-1-P) to deoxy-ribose 5-phosphate (dRib-5-P) and ribose 5-phosphate (Rib-5-P), respectively. This Streptococcus pyogenes serotype M3 (strain ATCC BAA-595 / MGAS315) protein is Phosphopentomutase.